The following is a 938-amino-acid chain: Isoleucine--tRNA ligase (938 aa).

A 'HIGH' region motif is present at residues 58–68 (PYANGSIHIGH). An L-isoleucyl-5'-AMP-binding site is contributed by E561. Residues 602–606 (KMSKS) carry the 'KMSKS' region motif. K605 lines the ATP pocket. Positions 901, 904, 921, and 924 each coordinate Zn(2+).

Belongs to the class-I aminoacyl-tRNA synthetase family. IleS type 1 subfamily. Monomer. Requires Zn(2+) as cofactor.

Its subcellular location is the cytoplasm. It carries out the reaction tRNA(Ile) + L-isoleucine + ATP = L-isoleucyl-tRNA(Ile) + AMP + diphosphate. Its function is as follows. Catalyzes the attachment of isoleucine to tRNA(Ile). As IleRS can inadvertently accommodate and process structurally similar amino acids such as valine, to avoid such errors it has two additional distinct tRNA(Ile)-dependent editing activities. One activity is designated as 'pretransfer' editing and involves the hydrolysis of activated Val-AMP. The other activity is designated 'posttransfer' editing and involves deacylation of mischarged Val-tRNA(Ile). The polypeptide is Isoleucine--tRNA ligase (Baumannia cicadellinicola subsp. Homalodisca coagulata).